The chain runs to 384 residues: Glucans biosynthesis protein C (384 aa).

10 helical membrane passes run 17–37 (AWLM…THSW), 54–74 (FIHA…SYML), 91–111 (VGIP…ILLQ), 140–160 (LWFL…FTWF), 173–193 (AISL…YAAI), 212–232 (FIVM…LAFI), 240–260 (FTTP…AYLL), 274–294 (TESV…FSLG), 311–331 (ASLF…AYIT), and 338–358 (LIGF…LYEI).

Belongs to the acyltransferase 3 family. OpgC subfamily.

It is found in the cell membrane. It functions in the pathway glycan metabolism; osmoregulated periplasmic glucan (OPG) biosynthesis. In terms of biological role, necessary for the succinyl substitution of periplasmic glucans. Could catalyze the transfer of succinyl residues from the cytoplasmic side of the membrane to the nascent glucan backbones on the periplasmic side of the membrane. This is Glucans biosynthesis protein C from Salmonella agona (strain SL483).